A 333-amino-acid polypeptide reads, in one-letter code: Anthranilate phosphoribosyltransferase (333 aa).

5-phospho-alpha-D-ribose 1-diphosphate is bound by residues G81, 84–85, T89, 91–94, 109–117, and A121; these read GD, NIST, and KHGNRSVSS. Residue G81 participates in anthranilate binding. S93 is a Mg(2+) binding site. N112 is an anthranilate binding site. R167 lines the anthranilate pocket. Mg(2+)-binding residues include D225 and E226.

It belongs to the anthranilate phosphoribosyltransferase family. As to quaternary structure, homodimer. It depends on Mg(2+) as a cofactor.

It catalyses the reaction N-(5-phospho-beta-D-ribosyl)anthranilate + diphosphate = 5-phospho-alpha-D-ribose 1-diphosphate + anthranilate. It participates in amino-acid biosynthesis; L-tryptophan biosynthesis; L-tryptophan from chorismate: step 2/5. Its function is as follows. Catalyzes the transfer of the phosphoribosyl group of 5-phosphorylribose-1-pyrophosphate (PRPP) to anthranilate to yield N-(5'-phosphoribosyl)-anthranilate (PRA). The protein is Anthranilate phosphoribosyltransferase of Haemophilus influenzae (strain PittGG).